The sequence spans 117 residues: Large ribosomal subunit protein bL20 (117 aa).

The protein belongs to the bacterial ribosomal protein bL20 family.

In terms of biological role, binds directly to 23S ribosomal RNA and is necessary for the in vitro assembly process of the 50S ribosomal subunit. It is not involved in the protein synthesizing functions of that subunit. This is Large ribosomal subunit protein bL20 from Photobacterium profundum (strain SS9).